We begin with the raw amino-acid sequence, 581 residues long: Moesin/ezrin/radixin homolog 1 (581 aa).

Residues 8-298 (MNVRVTTMDA…GNHELYMRRR (291 aa)) form the FERM domain. A disordered region spans residues 452 to 519 (QVAKGSRAAA…EERRTLAERN (68 aa)). Residues 459–469 (AAAALQAATTT) show a composition bias toward low complexity. The span at 477-486 (EEEENEEELI) shows a compositional bias: acidic residues. Over residues 495 to 519 (FSKDFDTDEHIKDPVEERRTLAERN) the composition is skewed to basic and acidic residues. At threonine 562 the chain carries Phosphothreonine.

In terms of assembly, interacts with cytoskeletal actin.

It is found in the cell junction. The protein localises to the adherens junction. Its subcellular location is the cell projection. It localises to the microvillus. The protein resides in the rhabdomere. It is found in the cell membrane. The protein localises to the cytoplasm. Its subcellular location is the cytoskeleton. Its function is as follows. Involved in connections of major cytoskeletal structures to the plasma membrane. The sequence is that of Moesin/ezrin/radixin homolog 1 from Anopheles gambiae (African malaria mosquito).